We begin with the raw amino-acid sequence, 100 residues long: Urease subunit gamma (100 aa).

The protein belongs to the urease gamma subunit family. In terms of assembly, heterotrimer of UreA (gamma), UreB (beta) and UreC (alpha) subunits. Three heterotrimers associate to form the active enzyme.

The protein localises to the cytoplasm. It catalyses the reaction urea + 2 H2O + H(+) = hydrogencarbonate + 2 NH4(+). It functions in the pathway nitrogen metabolism; urea degradation; CO(2) and NH(3) from urea (urease route): step 1/1. The polypeptide is Urease subunit gamma (Rhodopseudomonas palustris (strain BisA53)).